A 103-amino-acid polypeptide reads, in one-letter code: uncharacterized protein (103 aa).

The protein localises to the plastid. The protein resides in the chloroplast. This is an uncharacterized protein from Auxenochlorella pyrenoidosa (Freshwater green alga).